A 347-amino-acid chain; its full sequence is Probable E3 ubiquitin-protein ligase DTX3 (347 aa).

Residues 113–157 (EHPEMHRAGPPPLRAAPLLPPGARGLPPPPPPLPPPLPPRLREEA) form a disordered region. The segment covering 121–151 (GPPPLRAAPLLPPGARGLPPPPPPLPPPLPP) has biased composition (pro residues). Residues 164–205 (CPICLGEIQNAKTLEKCRHSFCEGCITRALQVKKACPMCGRF) form an RING-type zinc finger.

Belongs to the Deltex family. Homodimer. May form a heterodimers with other members of the Deltex family. Interacts with NOTCH1.

It localises to the cytoplasm. It catalyses the reaction S-ubiquitinyl-[E2 ubiquitin-conjugating enzyme]-L-cysteine + [acceptor protein]-L-lysine = [E2 ubiquitin-conjugating enzyme]-L-cysteine + N(6)-ubiquitinyl-[acceptor protein]-L-lysine.. Its pathway is protein modification; protein ubiquitination. In terms of biological role, regulator of Notch signaling, a signaling pathway involved in cell-cell communications that regulates a broad spectrum of cell-fate determinations. Probably acts both as a positive and negative regulator of Notch, depending on the developmental and cell context. Functions as an ubiquitin ligase protein in vitro, suggesting that it may regulate the Notch pathway via some ubiquitin ligase activity. This is Probable E3 ubiquitin-protein ligase DTX3 (DTX3) from Homo sapiens (Human).